The chain runs to 720 residues: Catalase-peroxidase (720 aa).

Positions 94 to 222 form a cross-link, tryptophyl-tyrosyl-methioninium (Trp-Tyr) (with M-248); the sequence is WHAAGTYRIA…LAAVTMGLIY (129 aa). H95 functions as the Proton acceptor in the catalytic mechanism. Residues 222 to 248 constitute a cross-link (tryptophyl-tyrosyl-methioninium (Tyr-Met) (with W-94)); that stretch reads YVNPEGVDGNPDPLKTAHDVRVTFARM. H263 is a heme b binding site.

This sequence belongs to the peroxidase family. Peroxidase/catalase subfamily. In terms of assembly, homodimer. Heme b is required as a cofactor. Post-translationally, formation of the three residue Trp-Tyr-Met cross-link is important for the catalase, but not the peroxidase activity of the enzyme.

It catalyses the reaction H2O2 + AH2 = A + 2 H2O. It carries out the reaction 2 H2O2 = O2 + 2 H2O. Functionally, bifunctional enzyme with both catalase and broad-spectrum peroxidase activity. This Synechococcus elongatus (strain ATCC 33912 / PCC 7942 / FACHB-805) (Anacystis nidulans R2) protein is Catalase-peroxidase.